The sequence spans 678 residues: RxLR effector protein PITG_16705 (678 aa).

The first 20 residues, 1–20 (MHLFFLTAVAFVITSVSVDA), serve as a signal peptide directing secretion. Positions 46–61 (RLLRKNSTVDLVGEER) match the RxLR-dEER motif.

Belongs to the RxLR effector family.

The protein localises to the secreted. It localises to the host cytoplasm. Functionally, effector that enhances P.infestans colonization of Nicotiana benthamiana leaves. This is RxLR effector protein PITG_16705 from Phytophthora infestans (strain T30-4) (Potato late blight agent).